Consider the following 280-residue polypeptide: Diaminopimelate epimerase (280 aa).

2 residues coordinate substrate: Asn13 and Asn66. The active-site Proton donor is Cys75. Substrate contacts are provided by residues Gly76–Asn77, Asn162, Asn195, and Glu213–Arg214. Catalysis depends on Cys222, which acts as the Proton acceptor. Residue Gly223–Thr224 coordinates substrate.

This sequence belongs to the diaminopimelate epimerase family. Homodimer.

Its subcellular location is the cytoplasm. It carries out the reaction (2S,6S)-2,6-diaminopimelate = meso-2,6-diaminopimelate. Its pathway is amino-acid biosynthesis; L-lysine biosynthesis via DAP pathway; DL-2,6-diaminopimelate from LL-2,6-diaminopimelate: step 1/1. In terms of biological role, catalyzes the stereoinversion of LL-2,6-diaminopimelate (L,L-DAP) to meso-diaminopimelate (meso-DAP), a precursor of L-lysine and an essential component of the bacterial peptidoglycan. In Synechococcus elongatus (strain ATCC 33912 / PCC 7942 / FACHB-805) (Anacystis nidulans R2), this protein is Diaminopimelate epimerase.